Reading from the N-terminus, the 96-residue chain is Co-chaperonin GroES (96 aa).

It belongs to the GroES chaperonin family. As to quaternary structure, heptamer of 7 subunits arranged in a ring. Interacts with the chaperonin GroEL.

It is found in the cytoplasm. In terms of biological role, together with the chaperonin GroEL, plays an essential role in assisting protein folding. The GroEL-GroES system forms a nano-cage that allows encapsulation of the non-native substrate proteins and provides a physical environment optimized to promote and accelerate protein folding. GroES binds to the apical surface of the GroEL ring, thereby capping the opening of the GroEL channel. The protein is Co-chaperonin GroES of Buchnera aphidicola subsp. Schizaphis graminum (strain Sg).